Here is a 506-residue protein sequence, read N- to C-terminus: ATP synthase subunit alpha (506 aa).

Position 171 to 178 (171 to 178 (GDRKTGKT)) interacts with ATP.

Belongs to the ATPase alpha/beta chains family. In terms of assembly, F-type ATPases have 2 components, CF(1) - the catalytic core - and CF(0) - the membrane proton channel. CF(1) has five subunits: alpha(3), beta(3), gamma(1), delta(1), epsilon(1). CF(0) has three main subunits: a(1), b(2) and c(9-12). The alpha and beta chains form an alternating ring which encloses part of the gamma chain. CF(1) is attached to CF(0) by a central stalk formed by the gamma and epsilon chains, while a peripheral stalk is formed by the delta and b chains.

It is found in the cell inner membrane. The enzyme catalyses ATP + H2O + 4 H(+)(in) = ADP + phosphate + 5 H(+)(out). Functionally, produces ATP from ADP in the presence of a proton gradient across the membrane. The alpha chain is a regulatory subunit. This chain is ATP synthase subunit alpha, found in Anaplasma phagocytophilum (strain HZ).